The primary structure comprises 606 residues: Glutamine--fructose-6-phosphate aminotransferase [isomerizing] (606 aa).

Cys-2 functions as the Nucleophile; for GATase activity in the catalytic mechanism. The region spanning 2 to 218 (CGIFGYLGEK…SGELAVLRIG (217 aa)) is the Glutamine amidotransferase type-2 domain. SIS domains are found at residues 278-424 (FTES…HRQV) and 448-596 (LDSS…VDRP). The active-site For Fru-6P isomerization activity is the Lys-601.

In terms of assembly, homodimer.

The protein resides in the cytoplasm. It carries out the reaction D-fructose 6-phosphate + L-glutamine = D-glucosamine 6-phosphate + L-glutamate. Functionally, catalyzes the first step in hexosamine metabolism, converting fructose-6P into glucosamine-6P using glutamine as a nitrogen source. This chain is Glutamine--fructose-6-phosphate aminotransferase [isomerizing], found in Chlamydia trachomatis serovar D (strain ATCC VR-885 / DSM 19411 / UW-3/Cx).